Reading from the N-terminus, the 85-residue chain is MTMFKGSNEMKSRWNWGSITCIICFTCVGSQLSMSSSKASNFSGPLQLYQRELEIFIVLTDVPNYRLIKENSHLHTTIVDQGRTV.

Topologically, residues 1-18 (MTMFKGSNEMKSRWNWGS) are extracellular. Residues 19 to 37 (ITCIICFTCVGSQLSMSSS) traverse the membrane as a helical segment. Over 38 to 85 (KASNFSGPLQLYQRELEIFIVLTDVPNYRLIKENSHLHTTIVDQGRTV) the chain is Cytoplasmic.

N-glycosylated. As to expression, expressed in kidney. Expressed in endothelial cells.

It is found in the cell membrane. Its function is as follows. Dual receptor for both endothelin-1 and the signal sequence of vascular endothelial growth factor A. Does not act as a receptor for angiotensin-2. Does not bind the VEGFA mature protein. May play a role in angiogenesis with a significant role in cardiovascular and neural development. The protein is Dual endothelin-1/VEGF signal peptide receptor of Homo sapiens (Human).